Here is a 136-residue protein sequence, read N- to C-terminus: MSLIKEFKAFASRGNVIDMAVGIIIGAAFGKIVSSFVADVIMPPIGIILGGVNFSDLSIVLQAAQGDAPSVVIAYGKFIQTVIDFTIIAFAIFMGLKAINTLKRKEEEAPKAPPAPTKEEELLSEIRDLLKAQQEK.

The next 2 membrane-spanning stretches (helical) occupy residues 9 to 29 (AFAS…GAAF) and 79 to 99 (IQTV…LKAI).

It belongs to the MscL family. In terms of assembly, homopentamer.

It is found in the cell inner membrane. Its function is as follows. Channel that opens in response to stretch forces in the membrane lipid bilayer. May participate in the regulation of osmotic pressure changes within the cell. The protein is Large-conductance mechanosensitive channel of Shewanella putrefaciens (strain CN-32 / ATCC BAA-453).